Consider the following 258-residue polypeptide: MYSSYSLSKRLIYVPILAIQFLLVRSVSSLNLTNEYLNHKCFVSEGKYKHGDKYENNLNVLNKNVLSYDLTSGFLHVSHGEGPDSVTIILQCRGDSFGSNCRSCYTTAIDGFHRRCQRNKGGIIWYDQCFLVISTIKPQLPRKIDFKNTFSMHNPNNVSSEPGSFDKMTRDFLYKLVQKASYPTVVEHQSTYYAAGEKKLGKRKLYAMMQCASDILQCKVCLEWCIRELPKCCDGKQGGRILGMSCNLRYELYPFLRR.

The N-terminal stretch at 1 to 29 is a signal peptide; that stretch reads MYSSYSLSKRLIYVPILAIQFLLVRSVSS. Gnk2-homologous domains lie at 36–138 and 146–255; these read YLNH…TIKP and FKNT…LYPF.

The protein belongs to the cysteine-rich repeat secretory protein family.

It localises to the secreted. This is Putative cysteine-rich repeat secretory protein 35 (CRRSP35) from Arabidopsis thaliana (Mouse-ear cress).